A 138-amino-acid chain; its full sequence is Putative pre-16S rRNA nuclease (138 aa).

Belongs to the YqgF nuclease family.

It localises to the cytoplasm. Its function is as follows. Could be a nuclease involved in processing of the 5'-end of pre-16S rRNA. This chain is Putative pre-16S rRNA nuclease, found in Escherichia fergusonii (strain ATCC 35469 / DSM 13698 / CCUG 18766 / IAM 14443 / JCM 21226 / LMG 7866 / NBRC 102419 / NCTC 12128 / CDC 0568-73).